The sequence spans 300 residues: Polyamine aminopropyltransferase (300 aa).

A PABS domain is found at tryptophan 4–aspartate 237. Glutamine 33 provides a ligand contact to S-methyl-5'-thioadenosine. Spermidine is bound by residues histidine 64 and glutamate 88. S-methyl-5'-thioadenosine contacts are provided by residues aspartate 108 and aspartate 140 to glycine 141. Aspartate 158 serves as the catalytic Proton acceptor. Proline 167 contacts S-methyl-5'-thioadenosine.

It belongs to the spermidine/spermine synthase family. In terms of assembly, homodimer or homotetramer.

It is found in the cytoplasm. It carries out the reaction S-adenosyl 3-(methylsulfanyl)propylamine + putrescine = S-methyl-5'-thioadenosine + spermidine + H(+). The protein operates within amine and polyamine biosynthesis; spermidine biosynthesis; spermidine from putrescine: step 1/1. Catalyzes the irreversible transfer of a propylamine group from the amino donor S-adenosylmethioninamine (decarboxy-AdoMet) to putrescine (1,4-diaminobutane) to yield spermidine. The polypeptide is Polyamine aminopropyltransferase (Sulfurisphaera tokodaii (strain DSM 16993 / JCM 10545 / NBRC 100140 / 7) (Sulfolobus tokodaii)).